The sequence spans 210 residues: Orotate phosphoribosyltransferase (210 aa).

Residue K26 participates in 5-phospho-alpha-D-ribose 1-diphosphate binding. 34-35 (FF) contributes to the orotate binding site. 5-phospho-alpha-D-ribose 1-diphosphate is bound by residues 72 to 73 (YK), R98, K99, K102, H104, and 123 to 131 (DDVITAGTA). 2 residues coordinate orotate: T127 and R155.

It belongs to the purine/pyrimidine phosphoribosyltransferase family. PyrE subfamily. In terms of assembly, homodimer. It depends on Mg(2+) as a cofactor.

The enzyme catalyses orotidine 5'-phosphate + diphosphate = orotate + 5-phospho-alpha-D-ribose 1-diphosphate. It participates in pyrimidine metabolism; UMP biosynthesis via de novo pathway; UMP from orotate: step 1/2. Functionally, catalyzes the transfer of a ribosyl phosphate group from 5-phosphoribose 1-diphosphate to orotate, leading to the formation of orotidine monophosphate (OMP). The sequence is that of Orotate phosphoribosyltransferase from Legionella pneumophila (strain Paris).